Reading from the N-terminus, the 454-residue chain is Trigger factor (454 aa).

In terms of domain architecture, PPIase FKBP-type spans G169–P261.

Belongs to the FKBP-type PPIase family. Tig subfamily.

Its subcellular location is the cytoplasm. It carries out the reaction [protein]-peptidylproline (omega=180) = [protein]-peptidylproline (omega=0). Functionally, involved in protein export. Acts as a chaperone by maintaining the newly synthesized protein in an open conformation. Functions as a peptidyl-prolyl cis-trans isomerase. The chain is Trigger factor from Picosynechococcus sp. (strain ATCC 27264 / PCC 7002 / PR-6) (Agmenellum quadruplicatum).